The following is a 395-amino-acid chain: Digeranylgeranylglycerophospholipid reductase (395 aa).

9 residues coordinate FAD: A15, D34, C45, A46, G48, R97, A121, D276, and G288. R329 and G365 together coordinate a 2,3-bis-O-(geranylgeranyl)-sn-glycerol 1-phospholipid.

It belongs to the geranylgeranyl reductase family. DGGGPL reductase subfamily. It depends on FAD as a cofactor.

The enzyme catalyses a 2,3-bis-O-phytanyl-sn-glycerol 1-phospholipid + 8 A = a 2,3-bis-O-(geranylgeranyl)-sn-glycerol 1-phospholipid + 8 AH2. The catalysed reaction is 2,3-bis-O-(phytanyl)-sn-glycerol 1-phosphate + 8 A = 2,3-bis-O-(geranylgeranyl)-sn-glycerol 1-phosphate + 8 AH2. It catalyses the reaction CDP-2,3-bis-O-(geranylgeranyl)-sn-glycerol + 8 AH2 = CDP-2,3-bis-O-(phytanyl)-sn-glycerol + 8 A. It carries out the reaction archaetidylserine + 8 AH2 = 2,3-bis-O-phytanyl-sn-glycero-3-phospho-L-serine + 8 A. It functions in the pathway membrane lipid metabolism; glycerophospholipid metabolism. In terms of biological role, is involved in the reduction of 2,3-digeranylgeranylglycerophospholipids (unsaturated archaeols) into 2,3-diphytanylglycerophospholipids (saturated archaeols) in the biosynthesis of archaeal membrane lipids. Catalyzes the formation of archaetidic acid (2,3-di-O-phytanyl-sn-glyceryl phosphate) from 2,3-di-O-geranylgeranylglyceryl phosphate (DGGGP) via the hydrogenation of each double bond of the isoprenoid chains. Is also probably able to reduce double bonds of geranyl groups in CDP-2,3-bis-O-(geranylgeranyl)-sn-glycerol and archaetidylserine, thus acting at various stages in the biosynthesis of archaeal membrane lipids. This Thermococcus gammatolerans (strain DSM 15229 / JCM 11827 / EJ3) protein is Digeranylgeranylglycerophospholipid reductase.